Consider the following 20-residue polypeptide: Large ribosomal subunit protein bL33 (20 aa).

It belongs to the bacterial ribosomal protein bL33 family.

The polypeptide is Large ribosomal subunit protein bL33 (rpmG) (Brevundimonas vesicularis (Pseudomonas vesicularis)).